Here is a 501-residue protein sequence, read N- to C-terminus: Dipeptide and tripeptide permease B (501 aa).

The Cytoplasmic portion of the chain corresponds to 1–27 (MRPSAPTGLLQQPKPFFMIFFVELWER). The helical transmembrane segment at 28-48 (FGYYGVQGILAVFFVQQLGFS) threads the bilayer. Residues 49-52 (QEQS) are Periplasmic-facing. A helical transmembrane segment spans residues 53 to 73 (FITFGAFSALVYGLISVGGYV). Residues 74–82 (GDHVLGTKR) are Cytoplasmic-facing. The chain crosses the membrane as a helical span at residues 83–103 (TMVLGAIVLVIGYFMTGMSIY). The Periplasmic portion of the chain corresponds to 104 to 106 (NPD). The chain crosses the membrane as a helical span at residues 107 to 127 (LIFYALGTIAVGNCLFKANPA). At 128–146 (SLLAKCYERGDPRLDGAFT) the chain is on the cytoplasmic side. The chain crosses the membrane as a helical span at residues 147 to 167 (LFYMSINIGSLISLSLAPVIA). At 168 to 172 (DHYGY) the chain is on the periplasmic side. Residues 173-193 (TVTYNLCGVGLVIALLTFFAC) traverse the membrane as a helical segment. Over 194–211 (RHMVRDIGSEPDHLPLDY) the chain is Cytoplasmic. A helical transmembrane segment spans residues 212 to 232 (GKLLLVLLGSVALVFFCAWLM). Position 233 (His-233) is a topological domain, periplasmic. A helical transmembrane segment spans residues 234 to 254 (HVVIANMVLMTVTLAVVIFFF). Residues 255 to 267 (REAFKLDAVARNK) lie on the Cytoplasmic side of the membrane. Residues 268 to 288 (MYVAFVLMLEAVVFYVLYAQM) traverse the membrane as a helical segment. Residues 289-311 (PTSLNFFAINNMHHEMLGMSVNP) lie on the Periplasmic side of the membrane. The chain crosses the membrane as a helical span at residues 312-332 (ISFQALNPFWVVVGSPVLAMI). Over 333–350 (YTRLGSKGRDLTMPLKFT) the chain is Cytoplasmic. Residues 351 to 371 (LGMLFCSLGFLTAAASGIWFA) form a helical membrane-spanning segment. The Periplasmic portion of the chain corresponds to 372–380 (DAQGLTSPW). Residues 381–401 (FMVLIYLFQSLGELMISALGL) traverse the membrane as a helical segment. Over 402–411 (AMVAALVPQR) the chain is Cytoplasmic. Residues 412–432 (LMGFILGMWFLTQAMASLLGG) traverse the membrane as a helical segment. Residues 433-456 (YVATFTAVPQGVTDPLQTLPIYTD) lie on the Periplasmic side of the membrane. Residues 457 to 477 (VFGKIGLVTLLVAVVMALMVP) traverse the membrane as a helical segment. The Cytoplasmic portion of the chain corresponds to 478–501 (WLNRMMHAGQGEEGEDLLSQQAKA).

The protein belongs to the major facilitator superfamily. Proton-dependent oligopeptide transporter (POT/PTR) (TC 2.A.17) family. DtpB subfamily.

It localises to the cell inner membrane. Functionally, proton-dependent permease that transports di- and tripeptides. In Aeromonas hydrophila subsp. hydrophila (strain ATCC 7966 / DSM 30187 / BCRC 13018 / CCUG 14551 / JCM 1027 / KCTC 2358 / NCIMB 9240 / NCTC 8049), this protein is Dipeptide and tripeptide permease B.